A 165-amino-acid chain; its full sequence is Lipoprotein signal peptidase (165 aa).

The next 3 membrane-spanning stretches (helical) occupy residues 9–29, 65–85, and 97–119; these read PFLW…LAVV, WQKY…LFFL, and TGYA…HGFV. Active-site residues include aspartate 121 and aspartate 139. A helical transmembrane segment spans residues 134-154; that stretch reads VFNIADVAICIGAGLLAIDAF.

Belongs to the peptidase A8 family.

The protein localises to the cell inner membrane. The catalysed reaction is Release of signal peptides from bacterial membrane prolipoproteins. Hydrolyzes -Xaa-Yaa-Zaa-|-(S,diacylglyceryl)Cys-, in which Xaa is hydrophobic (preferably Leu), and Yaa (Ala or Ser) and Zaa (Gly or Ala) have small, neutral side chains.. It functions in the pathway protein modification; lipoprotein biosynthesis (signal peptide cleavage). Functionally, this protein specifically catalyzes the removal of signal peptides from prolipoproteins. The protein is Lipoprotein signal peptidase of Histophilus somni (strain 129Pt) (Haemophilus somnus).